A 155-amino-acid chain; its full sequence is Deoxyuridine 5'-triphosphate nucleotidohydrolase (155 aa).

Residues 74 to 76 (RSG), asparagine 87, and 91 to 93 (LID) contribute to the substrate site.

This sequence belongs to the dUTPase family. It depends on Mg(2+) as a cofactor.

It catalyses the reaction dUTP + H2O = dUMP + diphosphate + H(+). The protein operates within pyrimidine metabolism; dUMP biosynthesis; dUMP from dCTP (dUTP route): step 2/2. Its function is as follows. This enzyme is involved in nucleotide metabolism: it produces dUMP, the immediate precursor of thymidine nucleotides and it decreases the intracellular concentration of dUTP so that uracil cannot be incorporated into DNA. This is Deoxyuridine 5'-triphosphate nucleotidohydrolase from Xanthomonas oryzae pv. oryzae (strain MAFF 311018).